A 505-amino-acid chain; its full sequence is MRTLLALAALAGFAAARVPAYAITRPVMRSDSRADAVKEAFSHAWDGYYNYAFPHDELHPISNGYGDSRNHWGASAVDALSTAIMMRNATIVNQILDHIAAVDYSKTNAMVSLFETTIRYLAGMISGYDLLKGPAAGLVDDSRVDVLLEQSQNLAEVLKFAFDTPSGVPYNMINITSGGNDGATTNGLAVTGTLVLEWTRLSDLTGNDEYARLSQRAEDYLLHPEPAQYEPFPGLIGSAVNIADGKLANGHISWNGGADSYYEYLIKMYVYDPERFGLYRDRWVAAAESSINHLASHPSTRPDVTFLATYNEEHQLGLTSQHLTCFDGGSFLLGGTLLDRQDFVDFGLDLVAGCHETYNSTLTGIGPEQFSWDPNGVPDSQKELFERAGFYINSGQYILRPEVIESFYYAWRVTGDGTYREWVWNAFTNINKYCRTATGFAGLENVNAANGGGRIDNQESFMFAEVLKYSFLTFAPEDDWQVQKGSGNTFVYNTEAHPFKVYTPQ.

The N-terminal stretch at 1-16 is a signal peptide; the sequence is MRTLLALAALAGFAAA. Residues asparagine 88 and asparagine 174 are each glycosylated (N-linked (GlcNAc...) asparagine). An intrachain disulfide couples cysteine 325 to cysteine 354. The N-linked (GlcNAc...) asparagine glycan is linked to asparagine 359. Glutamate 368 (proton donor) is an active-site residue. Position 494 (threonine 494) interacts with Ca(2+).

The protein belongs to the glycosyl hydrolase 47 family. In terms of assembly, monomer. Ca(2+) serves as cofactor. It depends on Mg(2+) as a cofactor.

The protein resides in the cytoplasmic vesicle lumen. The enzyme catalyses N(4)-(alpha-D-Man-(1-&gt;2)-alpha-D-Man-(1-&gt;2)-alpha-D-Man-(1-&gt;3)-[alpha-D-Man-(1-&gt;2)-alpha-D-Man-(1-&gt;3)-[alpha-D-Man-(1-&gt;2)-alpha-D-Man-(1-&gt;6)]-alpha-D-Man-(1-&gt;6)]-beta-D-Man-(1-&gt;4)-beta-D-GlcNAc-(1-&gt;4)-beta-D-GlcNAc)-L-asparaginyl-[protein] (N-glucan mannose isomer 9A1,2,3B1,2,3) + 4 H2O = N(4)-(alpha-D-Man-(1-&gt;3)-[alpha-D-Man-(1-&gt;3)-[alpha-D-Man-(1-&gt;6)]-alpha-D-Man-(1-&gt;6)]-beta-D-Man-(1-&gt;4)-beta-D-GlcNAc-(1-&gt;4)-beta-D-GlcNAc)-L-asparaginyl-[protein] (N-glucan mannose isomer 5A1,2) + 4 beta-D-mannose. The catalysed reaction is N(4)-(alpha-D-Man-(1-&gt;2)-alpha-D-Man-(1-&gt;2)-alpha-D-Man-(1-&gt;3)-[alpha-D-Man-(1-&gt;3)-[alpha-D-Man-(1-&gt;2)-alpha-D-Man-(1-&gt;6)]-alpha-D-Man-(1-&gt;6)]-beta-D-Man-(1-&gt;4)-beta-D-GlcNAc-(1-&gt;4)-beta-D-GlcNAc)-L-asparaginyl-[protein] (N-glucan mannose isomer 8A1,2,3B1,3) + 3 H2O = N(4)-(alpha-D-Man-(1-&gt;3)-[alpha-D-Man-(1-&gt;3)-[alpha-D-Man-(1-&gt;6)]-alpha-D-Man-(1-&gt;6)]-beta-D-Man-(1-&gt;4)-beta-D-GlcNAc-(1-&gt;4)-beta-D-GlcNAc)-L-asparaginyl-[protein] (N-glucan mannose isomer 5A1,2) + 3 beta-D-mannose. Its pathway is protein modification; protein glycosylation. Functionally, involved in the maturation of Asn-linked oligosaccharides. Progressively trims alpha-1,2-linked mannose residues from Man(9)GlcNAc(2) to produce Man(5)GlcNAc(2). The protein is Mannosyl-oligosaccharide alpha-1,2-mannosidase 1B (mns1B) of Emericella nidulans (strain FGSC A4 / ATCC 38163 / CBS 112.46 / NRRL 194 / M139) (Aspergillus nidulans).